We begin with the raw amino-acid sequence, 346 residues long: Heat-inducible transcription repressor HrcA (346 aa).

This sequence belongs to the HrcA family.

In terms of biological role, negative regulator of class I heat shock genes (grpE-dnaK-dnaJ and groELS operons). Prevents heat-shock induction of these operons. The sequence is that of Heat-inducible transcription repressor HrcA from Fructilactobacillus sanfranciscensis (Lactobacillus sanfranciscensis).